A 476-amino-acid polypeptide reads, in one-letter code: Aspartyl/glutamyl-tRNA(Asn/Gln) amidotransferase subunit B (476 aa).

Belongs to the GatB/GatE family. GatB subfamily. Heterotrimer of A, B and C subunits.

It catalyses the reaction L-glutamyl-tRNA(Gln) + L-glutamine + ATP + H2O = L-glutaminyl-tRNA(Gln) + L-glutamate + ADP + phosphate + H(+). The enzyme catalyses L-aspartyl-tRNA(Asn) + L-glutamine + ATP + H2O = L-asparaginyl-tRNA(Asn) + L-glutamate + ADP + phosphate + 2 H(+). Functionally, allows the formation of correctly charged Asn-tRNA(Asn) or Gln-tRNA(Gln) through the transamidation of misacylated Asp-tRNA(Asn) or Glu-tRNA(Gln) in organisms which lack either or both of asparaginyl-tRNA or glutaminyl-tRNA synthetases. The reaction takes place in the presence of glutamine and ATP through an activated phospho-Asp-tRNA(Asn) or phospho-Glu-tRNA(Gln). This chain is Aspartyl/glutamyl-tRNA(Asn/Gln) amidotransferase subunit B, found in Listeria monocytogenes serotype 4b (strain CLIP80459).